A 653-amino-acid polypeptide reads, in one-letter code: Cytidine monophosphate-N-acetylneuraminic acid hydroxylase (653 aa).

The Rieske domain occupies 11–120; sequence LSPEETSELK…PEYNEDGSLD (110 aa). The [2Fe-2S] cluster site is built by Cys-62, His-64, Cys-83, and His-86. Positions 596-622 are disordered; that stretch reads WNPSQATPAVEAKDPSSDSKDSATKPG. Residues 606–618 are compositionally biased toward basic and acidic residues; sequence EAKDPSSDSKDSA. A helical transmembrane segment spans residues 630–647; that stretch reads LLRPLGIVVALVGVGVAI.

This sequence belongs to the CMP-Neu5Ac hydroxylase family. [2Fe-2S] cluster serves as cofactor.

The protein localises to the membrane. It catalyses the reaction CMP-N-acetyl-beta-neuraminate + 2 Fe(II)-[cytochrome b5] + O2 + 2 H(+) = CMP-N-glycoloyl-beta-neuraminate + 2 Fe(III)-[cytochrome b5] + H2O. The protein operates within amino-sugar metabolism; N-acetylneuraminate metabolism. Sialic acids are components of carbohydrate chains of glycoconjugates and are involved in cell-cell recognition and cell-pathogen interactions. Catalyzes the conversion of CMP-N-acetylneuraminic acid (CMP-Neu5Ac) into its hydroxylated derivative CMP-N-glycolylneuraminic acid (CMP-Neu5Gc), a sialic acid abundantly expressed at the surface of many cells. The polypeptide is Cytidine monophosphate-N-acetylneuraminic acid hydroxylase (cnh) (Asterias rubens (Common European starfish)).